A 363-amino-acid polypeptide reads, in one-letter code: 3-isopropylmalate dehydrogenase (363 aa).

Residue 78–91 (XXXXXXXXXXXXXX) coordinates NAD(+). Positions 99, 109, 138, and 227 each coordinate substrate. D227, D251, and D255 together coordinate Mg(2+). Residue 285–297 (GSAPDIEGKNIAN) participates in NAD(+) binding.

Belongs to the isocitrate and isopropylmalate dehydrogenases family. LeuB type 1 subfamily. As to quaternary structure, homodimer. Mg(2+) is required as a cofactor. Mn(2+) serves as cofactor.

The protein resides in the cytoplasm. The enzyme catalyses (2R,3S)-3-isopropylmalate + NAD(+) = 4-methyl-2-oxopentanoate + CO2 + NADH. It functions in the pathway amino-acid biosynthesis; L-leucine biosynthesis; L-leucine from 3-methyl-2-oxobutanoate: step 3/4. Functionally, catalyzes the oxidation of 3-carboxy-2-hydroxy-4-methylpentanoate (3-isopropylmalate) to 3-carboxy-4-methyl-2-oxopentanoate. The product decarboxylates to 4-methyl-2 oxopentanoate. This Buchnera aphidicola subsp. Uroleucon solidaginis protein is 3-isopropylmalate dehydrogenase.